The sequence spans 227 residues: 7-cyano-7-deazaguanine synthase (227 aa).

ATP is bound at residue 11–21; that stretch reads VSGGMDSAALL. 4 residues coordinate Zn(2+): Cys192, Cys200, Cys203, and Cys206.

Belongs to the QueC family. It depends on Zn(2+) as a cofactor.

The enzyme catalyses 7-carboxy-7-deazaguanine + NH4(+) + ATP = 7-cyano-7-deazaguanine + ADP + phosphate + H2O + H(+). It participates in purine metabolism; 7-cyano-7-deazaguanine biosynthesis. Its function is as follows. Catalyzes the ATP-dependent conversion of 7-carboxy-7-deazaguanine (CDG) to 7-cyano-7-deazaguanine (preQ(0)). This is 7-cyano-7-deazaguanine synthase from Persephonella marina (strain DSM 14350 / EX-H1).